Reading from the N-terminus, the 179-residue chain is GAHLVPTKSGDADTYNANSDRTLCALLSELPLEKAVMVTYGGDDSLIAFPRGTQFVDPCPKLATKWNFECKIFKYDVPMFCGKFLLKTSSCYEFVPDPVKVLTKLGKKSIKDVQHLAEIYISLNDSNRALGNYMVVSKLSESVSDRYLYKGDSVHALCALWKHIKSFTALCTLLPRRKG.

It belongs to the ssRNA positive-strand viruses RNA-directed RNA polymerase family.

The catalysed reaction is RNA(n) + a ribonucleoside 5'-triphosphate = RNA(n+1) + diphosphate. It catalyses the reaction ATP + H2O = ADP + phosphate + H(+). Replicase large subunit: is an RNA-dependent RNA polymerase active in viral RNA replication. The polypeptide is Replicase large subunit (Tobacco rattle virus (strain PSG)).